Here is a 297-residue protein sequence, read N- to C-terminus: Ribonuclease HIII (297 aa).

The RNase H type-2 domain occupies 81–297 (IPIIGTDEVG…NTKKAQALLK (217 aa)). A divalent metal cation is bound by residues Asp87, Glu88, and Asp192.

It belongs to the RNase HII family. RnhC subfamily. Mn(2+) serves as cofactor. It depends on Mg(2+) as a cofactor.

The protein localises to the cytoplasm. It carries out the reaction Endonucleolytic cleavage to 5'-phosphomonoester.. In terms of biological role, endonuclease that specifically degrades the RNA of RNA-DNA hybrids. In Streptococcus agalactiae serotype III (strain NEM316), this protein is Ribonuclease HIII.